Here is a 206-residue protein sequence, read N- to C-terminus: MAANKGKSQGSLVLHKVIMVGSGGVGKSALTLQFMYDEFVEDYEPTKADSYRKKVVLDGEEVQIDILDTAGQEDYAAIRDNYFRSGEGFLLVFSITEHESFTATAEFREQILRVKAEEDKIPLLVVGNKSDLEERRQVPVEEARGKAEEWGVQYVETSAKTRANVDKVFFDLMREIRAKKMSENKDKNGRKSGKSKKSFKERCCLL.

Residue 21 to 29 coordinates GTP; the sequence is GSGGVGKSA. The short motif at 43–51 is the Effector region element; it reads YEPTKADSY. Residues 68–72, 128–131, and 158–160 contribute to the GTP site; these read DTAGQ, NKSD, and SAK. The disordered stretch occupies residues 181 to 206; it reads MSENKDKNGRKSGKSKKSFKERCCLL. Cys-203 carries the post-translational modification Cysteine methyl ester. Cys-203 carries S-geranylgeranyl cysteine lipidation. Positions 204–206 are cleaved as a propeptide — removed in mature form; that stretch reads CLL.

This sequence belongs to the small GTPase superfamily. Ras family. As to quaternary structure, interacts with EXOC2/Sec5 and EXOC8/Exo84. Interacts (via effector domain) with RALBP1. Post-translationally, prenylation is essential for membrane localization. The farnesylated form confers resistance to the proapoptotic and anti-anchorage-dependent growth effects of some geranylgeranyltransferase I inhibitors.

It is found in the cell membrane. It localises to the midbody. The enzyme catalyses GTP + H2O = GDP + phosphate + H(+). With respect to regulation, alternates between an inactive form bound to GDP and an active form bound to GTP. Activated by a guanine nucleotide-exchange factor (GEF) and inactivated by a GTPase-activating protein (GAP). Functionally, multifunctional GTPase involved in a variety of cellular processes including gene expression, cell migration, cell proliferation, oncogenic transformation and membrane trafficking. Accomplishes its multiple functions by interacting with distinct downstream effectors. Acts as a GTP sensor for GTP-dependent exocytosis of dense core vesicles. Required both to stabilize the assembly of the exocyst complex and to localize functional exocyst complexes to the leading edge of migrating cells. Required for suppression of apoptosis. In late stages of cytokinesis, upon completion of the bridge formation between dividing cells, mediates exocyst recruitment to the midbody to drive abscission. Involved in ligand-dependent receptor mediated endocytosis of the EGF and insulin receptors. This is Ras-related protein Ral-B (Ralb) from Rattus norvegicus (Rat).